Consider the following 300-residue polypeptide: UDP-N-acetylenolpyruvoylglucosamine reductase (300 aa).

Residues 28–193 form the FAD-binding PCMH-type domain; the sequence is KTGGPADWLA…LDATFALKLG (166 aa). The active site involves Arg172. Ser222 serves as the catalytic Proton donor. Glu292 is a catalytic residue.

The protein belongs to the MurB family. FAD serves as cofactor.

Its subcellular location is the cytoplasm. It catalyses the reaction UDP-N-acetyl-alpha-D-muramate + NADP(+) = UDP-N-acetyl-3-O-(1-carboxyvinyl)-alpha-D-glucosamine + NADPH + H(+). It functions in the pathway cell wall biogenesis; peptidoglycan biosynthesis. Cell wall formation. The sequence is that of UDP-N-acetylenolpyruvoylglucosamine reductase from Limosilactobacillus fermentum (strain NBRC 3956 / LMG 18251) (Lactobacillus fermentum).